Here is a 66-residue protein sequence, read N- to C-terminus: Alpha-conotoxin Vc1a (66 aa).

Residues 1-25 (MGMRMMFTVFLLVVLATTVVSSTSG) form the signal peptide. The propeptide occupies 26-47 (RREFRGRNAAAKASDLVSLTDK). 2 disulfide bridges follow: Cys-51-Cys-57 and Cys-52-Cys-65. Positions 53–55 (SDP) are ser-Xaa-Pro motif, crucial for potent interaction with nAChR. 2 key region for inhibition of alpha-9-alpha-10/CHRNA9-CHRNA10 nAChR regions span residues 54–56 (DPR) and 60–64 (DHPEI). Pro-55 carries the 4-hydroxyproline modification. At Glu-63 the chain carries 4-carboxyglutamate. Cys-65 carries the cysteine amide modification.

This sequence belongs to the conotoxin A superfamily. Vc1.1 is described as having no post-translational modifications (except C-terminal amidation), whereas Vc1a contains a hydroxyproline at Pro-55 and a 4-carboxyglutamate at Glu-63 (and a C-terminal amidation). In terms of processing, hydroxylation of Pro-55 is not important for inhibition of alpha-9-alpha-10/CHRNA9-CHRNA10 nAChRs, since [P6O]Vc1.1 (Pro-55 hydroxylated) shows similar inhibition than native toxin (IC(50)=99.1 nM). In contrast, hydroxylation of Pro-55 seems to impair inhibition of HVA calcium channel currents, since [P6O]Vc1.1 has no effect on HVA calcium channel currents. In vivo, hydroxylation of Pro-55 seems to induce the loss of analgesic effects in rat models of neuropathic pain, since [P6O]Vc1.1 has no effect on mechanical allodynia. Post-translationally, gamma-carboxylation of Glu-63 is not important for inhibition of alpha-9-alpha-10/CHRNA9-CHRNA10 nAChRs, since [E14gamma]Vc1.1 (carboxyglutamate at Glu-63) shows similar inhibition than native toxin (IC(50)=65.3 nM). In contrast, gamma-carboxylation of Glu-63 seems to impair inhibition of HVA calcium channel currents, since [E14gamma]Vc1.1 has no effect on HVA calcium channel currents. Non-native isomers 'ribbon' (with disulfide connectivity C1-C4; C2-C3) and 'beads' (with disulfide connectivity C1-C2; C3-C4) of Vc1.1 also inhibit HVA calcium channel currents in rat DRG neurons (20-30% inhibition at 1 uM toxin). It has been shown that both reduced and alkylated Vc1.1 have no effect on HVA calcium channel currents. The observed activity can be attributed to specific isomers. In terms of processing, [C3S]Vc1.1(1-8) mutant is C-terminally amidated. Expressed by the venom duct.

The protein localises to the secreted. Alpha-conotoxins act on postsynaptic membranes, they bind to the nicotinic acetylcholine receptors (nAChR) and thus inhibit them. This toxin (native toxin Vc1a; hydroxylated and gamma-carboxylated) blocks alpha-9-alpha-10/CHRNA9-CHRNA10 nAChRs (IC(50)=62.9 nM). In contrast to the non-post-translationally modified analog Vc1.1, Vc1a does not inhibit high voltage-activated (HVA) calcium channel currents. In vivo, in contrast to Vc1.1, Vc1a does not show analgesic effects in rat models of neuropathic pain. In terms of biological role, the synthetic peptide Vc1.1 (a non-hydroxylated and non-gamma-carboxylated analog of Vc1a) has two types of targets. It blocks alpha-9-alpha-10/CHRNA9-CHRNA10 nAChRs (on rat receptors, IC(50)=19-109 nM) (with preference for rat over human receptors) and inhibits high voltage-activated (HVA) calcium channel (Cav2.2, Cav2.3) currents by acting on GABA(B) receptors (GABBR1 and GABBR2) (IC(50)=1.7 nM). It also shows moderate inhibition on alpha-6/alpha-3-beta-2-beta-3 (CHRNA6/CHRNA3-CHRNB2-CHRNB3) (IC(50)=140 nM) and alpha-6/alpha-3-beta-4 (CHRNA6/CHRNA3-CHRNB4) (IC(50)=980 nM). On alpha-9-alpha-10/CHRNA9-CHRNA10 nAChR, it most likely interacts with the alpha-10(+)/alpha-9(-)interface of the receptor. In vivo, it acts as a powerful analgesic in rat models of neuropathic pain. This is Alpha-conotoxin Vc1a from Conus victoriae (Queen Victoria cone).